The following is a 381-amino-acid chain: Creatine kinase B-type (381 aa).

Residue Ser4 is modified to Phosphoserine. The 88-residue stretch at 11–98 folds into the Phosphagen kinase N-terminal domain; it reads KLRFPAEDEF…FDPIIEDRHG (88 aa). Residue Thr35 is modified to Phosphothreonine. Lys45 is covalently cross-linked (Glycyl lysine isopeptide (Lys-Gly) (interchain with G-Cter in ubiquitin)). Val72 contributes to the creatine binding site. Basic and acidic residues predominate over residues 96–110; sequence RHGGYKPSDEHKTDL. Residues 96 to 123 form a disordered region; that stretch reads RHGGYKPSDEHKTDLNPDNLQGGDDLDP. Residues Lys101 and Lys107 each participate in a glycyl lysine isopeptide (Lys-Gly) (interchain with G-Cter in ubiquitin) cross-link. Tyr125 is modified (phosphotyrosine). A Phosphagen kinase C-terminal domain is found at 125–367; that stretch reads YVLSSRVRTG…KLLIEMEQRL (243 aa). Residues 128-132, Arg130, Arg132, and His191 contribute to the ATP site; that span reads SSRVR. The tract at residues 130–138 is internal MTS-like signal; the sequence is RVRTGRSIR. Ser199 carries the phosphoserine modification. Glu232 contacts creatine. Residue Arg236 coordinates ATP. Tyr269 carries the post-translational modification 3'-nitrotyrosine. Residue Ser285 coordinates creatine. Residues Arg292, 292–296, Arg320, 320–325, and Asp335 contribute to the ATP site; these read RAGVH and RGTGGV. Residue Thr322 is modified to Phosphothreonine. A Glycyl lysine isopeptide (Lys-Gly) (interchain with G-Cter in ubiquitin) cross-link involves residue Lys381.

The protein belongs to the ATP:guanido phosphotransferase family. Dimer of identical or non-identical chains, which can be either B (brain type) or M (muscle type). With MM being the major form in skeletal muscle and myocardium, MB existing in myocardium, and BB existing in many tissues, especially brain. Interacts with SLC12A6 (via C-terminus); the interaction may be required for SLC12A6 potassium-chloride cotransport activity. Post-translationally, ubiquitinated by the ECS(ASB9) complex, leading to its degradation by the proteasome.

It localises to the cytoplasm. The protein localises to the cytosol. It is found in the mitochondrion. The protein resides in the cell membrane. The enzyme catalyses creatine + ATP = N-phosphocreatine + ADP + H(+). Reversibly catalyzes the transfer of phosphate between ATP and various phosphogens (e.g. creatine phosphate). Creatine kinase isoenzymes play a central role in energy transduction in tissues with large, fluctuating energy demands, such as skeletal muscle, heart, brain and spermatozoa. Acts as a key regulator of adaptive thermogenesis as part of the futile creatine cycle: localizes to the mitochondria of thermogenic fat cells and acts by mediating phosphorylation of creatine to initiate a futile cycle of creatine phosphorylation and dephosphorylation. During the futile creatine cycle, creatine and N-phosphocreatine are in a futile cycle, which dissipates the high energy charge of N-phosphocreatine as heat without performing any mechanical or chemical work. The sequence is that of Creatine kinase B-type (CKB) from Sus scrofa (Pig).